A 140-amino-acid polypeptide reads, in one-letter code: MAENREPRCAIEAELDPVEYTLRKRLPHRLPRRPNDIYVNMKTDFKAQLARCQKLLDGGTRGQNACTEIYIHGLGLAINRAINIALQLQAGSFGSLQVAANTSTVELVDELEPETDSREPLTRVRNNSAIHIRVFRVTPK.

This sequence belongs to the histone-like Alba family. Component of nuclear RNase P and RNase MRP complexes. RNase P consists of a catalytic RNA moiety and 10 different protein chains; POP1, POP4, POP5, POP7, RPP14, RPP21, RPP25, RPP30, RPP38 and RPP40. Within the RNase P complex, POP1, POP7 and RPP25 form the 'finger' subcomplex, POP5, RPP14, RPP40 and homodimeric RPP30 form the 'palm' subcomplex, and RPP21, POP4 and RPP38 form the 'wrist' subcomplex. All subunits of the RNase P complex interact with the catalytic RNA. Several subunits of RNase P are also part of the RNase MRP complex. RNase MRP consists of a catalytic RNA moiety and about 8 protein subunits; POP1, POP7, RPP25, RPP30, RPP38, RPP40 and possibly also POP4 and POP5. Interacts with SMN1. POP7 forms a heterodimer with RPP25 that binds to the P3 stem loop of the catalytic RNA.

The protein localises to the nucleus. It localises to the nucleolus. Its subcellular location is the cytoplasm. It is found in the cytoplasmic granule. Its function is as follows. Component of ribonuclease P, a ribonucleoprotein complex that generates mature tRNA molecules by cleaving their 5'-ends. Also a component of the MRP ribonuclease complex, which cleaves pre-rRNA sequences. This is Ribonuclease P protein subunit p20 (Pop7) from Mus musculus (Mouse).